The chain runs to 734 residues: Photosystem I P700 chlorophyll a apoprotein A2 (734 aa).

8 helical membrane passes run 46 to 69, 135 to 158, 175 to 199, 273 to 291, 330 to 353, 369 to 395, 417 to 439, and 517 to 535; these read IFAS…FHVA, LYGG…LHLQ, LNHH…HVAI, MAHH…GHMY, LHFQ…QHMY, AALY…IFFI, AIIS…LYVH, and FLVH…LILV. Residues C559 and C568 each coordinate [4Fe-4S] cluster. The next 2 helical transmembrane spans lie at 575 to 596 and 643 to 665; these read AFYL…YWHW and LSVW…MFLI. Chlorophyll a-binding residues include H654, M662, and Y670. W671 serves as a coordination point for phylloquinone. A helical membrane pass occupies residues 707–727; the sequence is LVGLAHFSVGYIFTYAAFLIA.

It belongs to the PsaA/PsaB family. As to quaternary structure, the PsaA/B heterodimer binds the P700 chlorophyll special pair and subsequent electron acceptors. PSI consists of a core antenna complex that captures photons, and an electron transfer chain that converts photonic excitation into a charge separation. The eukaryotic PSI reaction center is composed of at least 11 subunits. It depends on P700 is a chlorophyll a/chlorophyll a' dimer, A0 is one or more chlorophyll a, A1 is one or both phylloquinones and FX is a shared 4Fe-4S iron-sulfur center. as a cofactor.

The protein resides in the plastid. The protein localises to the chloroplast thylakoid membrane. The catalysed reaction is reduced [plastocyanin] + hnu + oxidized [2Fe-2S]-[ferredoxin] = oxidized [plastocyanin] + reduced [2Fe-2S]-[ferredoxin]. Its function is as follows. PsaA and PsaB bind P700, the primary electron donor of photosystem I (PSI), as well as the electron acceptors A0, A1 and FX. PSI is a plastocyanin-ferredoxin oxidoreductase, converting photonic excitation into a charge separation, which transfers an electron from the donor P700 chlorophyll pair to the spectroscopically characterized acceptors A0, A1, FX, FA and FB in turn. Oxidized P700 is reduced on the lumenal side of the thylakoid membrane by plastocyanin. This chain is Photosystem I P700 chlorophyll a apoprotein A2, found in Physcomitrium patens (Spreading-leaved earth moss).